A 369-amino-acid chain; its full sequence is Anhydro-N-acetylmuramic acid kinase (369 aa).

Position 12–19 (12–19 (GTSLDGVD)) interacts with ATP.

Belongs to the anhydro-N-acetylmuramic acid kinase family.

It carries out the reaction 1,6-anhydro-N-acetyl-beta-muramate + ATP + H2O = N-acetyl-D-muramate 6-phosphate + ADP + H(+). It participates in amino-sugar metabolism; 1,6-anhydro-N-acetylmuramate degradation. It functions in the pathway cell wall biogenesis; peptidoglycan recycling. In terms of biological role, catalyzes the specific phosphorylation of 1,6-anhydro-N-acetylmuramic acid (anhMurNAc) with the simultaneous cleavage of the 1,6-anhydro ring, generating MurNAc-6-P. Is required for the utilization of anhMurNAc either imported from the medium or derived from its own cell wall murein, and thus plays a role in cell wall recycling. In Escherichia coli (strain K12 / MC4100 / BW2952), this protein is Anhydro-N-acetylmuramic acid kinase.